Consider the following 525-residue polypeptide: Peptide chain release factor 3 (525 aa).

One can recognise a tr-type G domain in the interval 11-279; it reads ERRRTFAIIS…AFVDMAPAPE (269 aa). GTP contacts are provided by residues 20 to 27, 88 to 92, and 142 to 145; these read SHPDAGKT, DTPGH, and NKLD.

This sequence belongs to the TRAFAC class translation factor GTPase superfamily. Classic translation factor GTPase family. PrfC subfamily.

It localises to the cytoplasm. In terms of biological role, increases the formation of ribosomal termination complexes and stimulates activities of RF-1 and RF-2. It binds guanine nucleotides and has strong preference for UGA stop codons. It may interact directly with the ribosome. The stimulation of RF-1 and RF-2 is significantly reduced by GTP and GDP, but not by GMP. The sequence is that of Peptide chain release factor 3 from Latilactobacillus sakei subsp. sakei (strain 23K) (Lactobacillus sakei subsp. sakei).